The chain runs to 535 residues: RNA-splicing ligase RtcB homolog 1 (535 aa).

The segment covering 1-16 has biased composition (basic residues); the sequence is MAKSRYSRKNKGKKLQ. The disordered stretch occupies residues 1 to 29; it reads MAKSRYSRKNKGKKLQRVQENTVSTEEKS. Positions 152, 155, 260, 292, and 383 each coordinate Mn(2+). 259–263 is a binding site for GMP; the sequence is NHYLE. GMP contacts are provided by residues 383-384, 432-435, Ser439, 458-461, and Lys534; these read HN, GGSM, and HGAG. Catalysis depends on His458, which acts as the GMP-histidine intermediate.

This sequence belongs to the RtcB family. In terms of assembly, catalytic component of the tRNA-splicing ligase complex. Mn(2+) is required as a cofactor.

The catalysed reaction is a 3'-end 3'-phospho-ribonucleotide-RNA + a 5'-end dephospho-ribonucleoside-RNA + GTP = a ribonucleotidyl-ribonucleotide-RNA + GMP + diphosphate. It catalyses the reaction a 3'-end 2',3'-cyclophospho-ribonucleotide-RNA + a 5'-end dephospho-ribonucleoside-RNA + GTP + H2O = a ribonucleotidyl-ribonucleotide-RNA + GMP + diphosphate + H(+). Functionally, catalytic subunit of the tRNA-splicing ligase complex that acts by directly joining spliced tRNA halves to mature-sized tRNAs by incorporating the precursor-derived splice junction phosphate into the mature tRNA as a canonical 3',5'-phosphodiester. May act as an RNA ligase with broad substrate specificity, and may function toward other RNAs. The sequence is that of RNA-splicing ligase RtcB homolog 1 from Entamoeba dispar (strain ATCC PRA-260 / SAW760).